A 402-amino-acid polypeptide reads, in one-letter code: Serine/threonine transporter SstT (402 aa).

9 consecutive transmembrane segments (helical) span residues 19–39 (IGVV…AIGL), 43–63 (LFVG…VISA), 86–106 (TFAA…TLIL), 138–158 (AITE…GLAM), 179–199 (VVKW…FTSI), 212–232 (LLIL…NPII), 287–307 (IPLG…ILTL), 327–347 (VVAA…LLLI), and 354–374 (FGIS…VGVI).

This sequence belongs to the dicarboxylate/amino acid:cation symporter (DAACS) (TC 2.A.23) family.

It localises to the cell membrane. The catalysed reaction is L-serine(in) + Na(+)(in) = L-serine(out) + Na(+)(out). It carries out the reaction L-threonine(in) + Na(+)(in) = L-threonine(out) + Na(+)(out). Functionally, involved in the import of serine and threonine into the cell, with the concomitant import of sodium (symport system). The sequence is that of Serine/threonine transporter SstT from Streptococcus agalactiae serotype III (strain NEM316).